The primary structure comprises 279 residues: Thymidylate synthase (279 aa).

Residue R141–R142 participates in dUMP binding. The active-site Nucleophile is the C161. Residues R181–D184, N192, and H222–Y224 each bind dUMP. D184 is a binding site for (6R)-5,10-methylene-5,6,7,8-tetrahydrofolate. A278 is a (6R)-5,10-methylene-5,6,7,8-tetrahydrofolate binding site.

Belongs to the thymidylate synthase family. Bacterial-type ThyA subfamily. Homodimer.

It localises to the cytoplasm. The enzyme catalyses dUMP + (6R)-5,10-methylene-5,6,7,8-tetrahydrofolate = 7,8-dihydrofolate + dTMP. The protein operates within pyrimidine metabolism; dTTP biosynthesis. In terms of biological role, catalyzes the reductive methylation of 2'-deoxyuridine-5'-monophosphate (dUMP) to 2'-deoxythymidine-5'-monophosphate (dTMP) while utilizing 5,10-methylenetetrahydrofolate (mTHF) as the methyl donor and reductant in the reaction, yielding dihydrofolate (DHF) as a by-product. This enzymatic reaction provides an intracellular de novo source of dTMP, an essential precursor for DNA biosynthesis. This Bacillus subtilis subsp. natto protein is Thymidylate synthase.